A 2471-amino-acid chain; its full sequence is Neurogenic locus notch homolog protein 2 (2471 aa).

The signal sequence occupies residues 1 to 25; the sequence is MPALRPALLWALLALWLCCAAPAHA. EGF-like domains are found at residues 26–63, 64–102, 105–143, and 144–180; these read LQCR…EYCQ, HRDP…EDCQ, TSHP…KECQ, and WTDA…QKCE. Over 26–1677 the chain is Extracellular; it reads LQCRDGYEPC…SESLTPERTQ (1652 aa). 84 cysteine pairs are disulfide-bonded: C28/C41, C35/C51, C53/C62, C68/C79, C73/C90, C92/C101, C109/C121, C115/C131, C133/C142, C148/C159, C153/C168, C170/C179, C186/C198, C192/C207, C209/C218, C225/C236, C230/C246, C248/C257, C264/C275, C269/C284, C286/C295, C302/C315, C309/C324, C326/C335, C342/C353, C347/C362, C364/C373, C379/C390, C384/C401, C403/C412, C419/C433, C427/C442, C444/C453, C460/C471, C465/C480, C482/C491, C498/C509, C503/C518, C520/C529, C536/C547, C541/C556, C558/C567, C574/C584, C579/C593, C595/C604, C611/C622, C616/C631, C633/C642, C649/C659, C654/C668, C670/C679, C686/C697, C691/C706, C708/C717, C724/C734, C729/C743, C745/C754, C761/C772, C766/C781, C783/C792, C799/C810, C804/C819, C821/C830, C837/C848, C842/C859, C861/C870, C877/C888, C882/C897, C899/C908, C915/C926, C920/C935, C937/C946, C953/C964, C958/C973, C975/C984, C991/C1002, C996/C1011, C1013/C1022, C1029/C1040, C1034/C1049, C1051/C1060, C1067/C1078, C1072/C1087, and C1089/C1098. N46 carries an N-linked (GlcNAc...) asparagine glycan. An N-linked (GlcNAc...) asparagine glycan is attached at N155. An EGF-like 5; calcium-binding domain is found at 182-219; it reads DVNECDIPGHCQHGGTCLNLPGSYQCQCPQGFTGQYCD. The EGF-like 6 domain occupies 221-258; sequence LYVPCAPSPCVNGGTCRQTGDFTFECNCLPGFEGSTCE. Residues 260–296 form the EGF-like 7; calcium-binding domain; the sequence is NIDDCPNHRCQNGGVCVDGVNTYNCRCPPQWTGQFCT. The EGF-like 8; calcium-binding domain maps to 298-336; that stretch reads DVDECLLQPNACQNGGTCANRNGGYGCVCVNGWSGDDCS. Residues 338-374 enclose the EGF-like 9; calcium-binding domain; that stretch reads NIDDCAFASCTPGSTCIDRVASFSCMCPEGKAGLLCH. Residues 375–413 form the EGF-like 10 domain; it reads LDDACISNPCHKGALCDTNPLNGQYICTCPQGYKGADCT. One can recognise an EGF-like 11; calcium-binding domain in the interval 415–454; sequence DVDECAMANSNPCEHAGKCVNTDGAFHCECLKGYAGPRCE. The 37-residue stretch at 456-492 folds into the EGF-like 12; calcium-binding domain; the sequence is DINECHSDPCQNDATCLDKIGGFTCLCMPGFKGVHCE. The EGF-like 13; calcium-binding domain occupies 494–530; that stretch reads EINECQSNPCVNNGQCVDKVNRFQCLCPPGFTGPVCQ. In terms of domain architecture, EGF-like 14; calcium-binding spans 532 to 568; sequence DIDDCSSTPCLNGAKCIDHPNGYECQCATGFTGVLCE. In terms of domain architecture, EGF-like 15; calcium-binding spans 570–605; that stretch reads NIDNCDPDPCHHGQCQDGIDSYTCICNPGYMGAICS. An EGF-like 16; calcium-binding domain is found at 607–643; sequence QIDECYSSPCLNDGRCIDLVNGYQCNCQPGTSGVNCE. Residue S613 is glycosylated (O-linked (Glc...) serine; alternate). O-linked (Xyl...) serine; alternate glycosylation occurs at S613. One can recognise an EGF-like 17; calcium-binding domain in the interval 645–680; the sequence is NFDDCASNPCIHGICMDGINRYSCVCSPGFTGQRCN. An EGF-like 18; calcium-binding domain is found at 682 to 718; the sequence is DIDECASNPCRKGATCINGVNGFRCICPEGPHHPSCY. The region spanning 720 to 755 is the EGF-like 19 domain; that stretch reads QVNECLSNPCIHGNCTGGLSGYKCLCDAGWVGINCE. N-linked (GlcNAc...) asparagine glycosylation occurs at N733. Positions 757 to 793 constitute an EGF-like 20; calcium-binding domain; the sequence is DKNECLSNPCQNGGTCDNLVNGYRCTCKKGFKGYNCQ. Positions 795 to 831 constitute an EGF-like 21; calcium-binding domain; that stretch reads NIDECASNPCLNQGTCFDDISGYTCHCVLPYTGKNCQ. An EGF-like 22 domain is found at 833-871; that stretch reads VLAPCSPNPCENAAVCKESPNFESYTCLCAPGWQGQRCT. Residues 873 to 909 form the EGF-like 23; calcium-binding domain; the sequence is DIDECISKPCMNHGLCHNTQGSYMCECPPGFSGMDCE. In terms of domain architecture, EGF-like 24; calcium-binding spans 911 to 947; sequence DIDDCLANPCQNGGSCMDGVNTFSCLCLPGFTGDKCQ. The region spanning 949-985 is the EGF-like 25; calcium-binding domain; the sequence is DMNECLSEPCKNGGTCSDYVNSYTCKCQAGFDGVHCE. The region spanning 987–1023 is the EGF-like 26; calcium-binding domain; the sequence is NINECTESSCFNGGTCVDGINSFSCLCPVGFTGSFCL. In terms of domain architecture, EGF-like 27; calcium-binding spans 1025-1061; that stretch reads EINECSSHPCLNEGTCVDGLGTYRCSCPLGYTGKNCQ. EGF-like domains lie at 1063–1099 and 1101–1147; these read LVNL…AYCD and PNVS…SYCE. N1102 is a glycosylation site (N-linked (GlcNAc...) asparagine). Disulfide bonds link C1105-C1126, C1120-C1135, C1137-C1146, C1153-C1164, C1158-C1173, C1175-C1184, C1191-C1202, C1196-C1211, C1213-C1222, C1229-C1241, C1235-C1250, C1252-C1261, C1268-C1281, C1273-C1290, C1292-C1301, C1308-C1319, C1313-C1331, C1333-C1342, C1378-C1389, C1383-C1400, C1402-C1411, C1425-C1448, C1430-C1443, and C1439-C1455. Residues 1149–1185 form the EGF-like 30; calcium-binding domain; it reads QLDECASNPCQHGATCSDFIGGYRCECVPGYQGVNCE. In terms of domain architecture, EGF-like 31; calcium-binding spans 1187-1223; the sequence is EVDECQNQPCQNGGTCIDLVNHFKCSCPPGTRGLLCE. The region spanning 1225 to 1262 is the EGF-like 32; calcium-binding domain; it reads NIDDCARGPHCLNGGQCMDRIGGYSCRCLPGFAGERCE. 3 consecutive EGF-like domains span residues 1264–1302, 1304–1343, and 1374–1412; these read DINE…RHCE, FVDV…ARCQ, and CESG…SRCE. LNR repeat units follow at residues 1425 to 1465, 1466 to 1502, and 1503 to 1544; these read CLSQ…PWAN, CSSP…NSKT, and CKYD…NLAE. The negative regulatory region (NRR) stretch occupies residues 1425–1677; sequence CLSQYCADKA…SESLTPERTQ (253 aa). Residue N1465 is glycosylated (N-linked (GlcNAc...) asparagine). Cystine bridges form between C1466-C1489, C1472-C1484, C1480-C1496, C1503-C1527, C1509-C1522, C1518-C1534, and C1632-C1639. A helical transmembrane segment spans residues 1678–1698; it reads LLYLLAVAVVIILFIILLGVI. Residues 1699–2471 lie on the Cytoplasmic side of the membrane; the sequence is MAKRKRKHGS…PPHNNMQVYA (773 aa). At T1716 the chain carries Phosphothreonine. The disordered stretch occupies residues 1754–1788; sequence TSEHWVDDEGPQPKKVKAEDEALLSEEDDPIDRRP. Residues 1774-1783 show a composition bias toward acidic residues; it reads EALLSEEDDP. S1778 carries the post-translational modification Phosphoserine. Phosphothreonine is present on T1802. S1804 is subject to Phosphoserine. Residue T1808 is modified to Phosphothreonine. ANK repeat units lie at residues 1827-1871, 1876-1905, 1909-1939, 1943-1972, 1976-2005, and 2009-2038; these read DGCT…SLQA, TGEM…DANA, MGRC…DLDA, DGTT…DVNA, HGKS…NRDM, and KEET…NRDI. Phosphoserine occurs at positions 1842 and 1845. Residues S2070, S2078, and S2081 each carry the phosphoserine modification. Disordered regions lie at residues 2091–2168 and 2380–2471; these read FLSL…TSSP and VGKY…QVYA. Position 2097 is a phosphothreonine (T2097). Positions 2098–2107 are enriched in basic residues; it reads PMGKKSRRPS. Polar residues-rich tracts occupy residues 2108–2117, 2137–2150, 2159–2168, and 2388–2406; these read AKSTMPTSLP, EKVQ…TLSP, TYVSDTTSSP, and SQHS…SHSG. Low complexity predominate over residues 2417-2445; sequence PSPESPDQWSSSSPHSASDWSDVTTSPTP.

Belongs to the NOTCH family. In terms of assembly, heterodimer of a C-terminal fragment N(TM) and an N-terminal fragment N(EC) which are probably linked by disulfide bonds. Interacts with MAML1, MAML2 and MAML3 which act as transcriptional coactivators for NOTCH2. Interacts with RELA/p65. Interacts with HIF1AN. Interacts (via ANK repeats) with TCIM, the interaction inhibits the nuclear translocation of NOTCH2 N2ICD. Interacts with CUL1, RBX1, SKP1 and FBXW7 that are SCF(FBXW7) E3 ubiquitin-protein ligase complex components. Interacts with MINAR1; this interaction increases MINAR1 stability and function. Interacts with NOTCH2NL (NOTCH2NLA, NOTCH2NLB and/or NOTCH2NLC); leading to enhance Notch signaling pathway in a non-cell-autonomous manner. Interacts with MDK; this interaction mediates a nuclear accumulation of NOTCH2 and therefore activation of NOTCH2 signaling leading to interaction between HES1 and STAT3. Interacts with MINAR2. Post-translationally, synthesized in the endoplasmic reticulum as an inactive form which is proteolytically cleaved by a furin-like convertase in the trans-Golgi network before it reaches the plasma membrane to yield an active, ligand-accessible form. Cleavage results in a C-terminal fragment N(TM) and a N-terminal fragment N(EC). Following ligand binding, it is cleaved by TNF-alpha converting enzyme (TACE) to yield a membrane-associated intermediate fragment called notch extracellular truncation (NEXT). This fragment is then cleaved by presenilin dependent gamma-secretase to release a notch-derived peptide containing the intracellular domain (NICD) from the membrane. Hydroxylated by HIF1AN. In terms of processing, can be either O-glucosylated or O-xylosylated at Ser-613 by POGLUT1. Post-translationally, phosphorylated by GSK3. GSK3-mediated phosphorylation is necessary for NOTCH2 recognition by FBXW7, ubiquitination and degradation via the ubiquitin proteasome pathway. In terms of tissue distribution, expressed in the brain, heart, kidney, lung, skeletal muscle and liver. Ubiquitously expressed in the embryo.

The protein resides in the cell membrane. It localises to the nucleus. The protein localises to the cytoplasm. In terms of biological role, functions as a receptor for membrane-bound ligands Jagged-1 (JAG1), Jagged-2 (JAG2) and Delta-1 (DLL1) to regulate cell-fate determination. Upon ligand activation through the released notch intracellular domain (NICD) it forms a transcriptional activator complex with RBPJ/RBPSUH and activates genes of the enhancer of split locus. Affects the implementation of differentiation, proliferation and apoptotic programs. Involved in bone remodeling and homeostasis. In collaboration with RELA/p65 enhances NFATc1 promoter activity and positively regulates RANKL-induced osteoclast differentiation. Positively regulates self-renewal of liver cancer cells. This chain is Neurogenic locus notch homolog protein 2, found in Homo sapiens (Human).